Reading from the N-terminus, the 459-residue chain is ATP synthase subunit beta (459 aa).

Glycine 147 to threonine 154 is a binding site for ATP.

Belongs to the ATPase alpha/beta chains family. F-type ATPases have 2 components, CF(1) - the catalytic core - and CF(0) - the membrane proton channel. CF(1) has five subunits: alpha(3), beta(3), gamma(1), delta(1), epsilon(1). CF(0) has three main subunits: a(1), b(2) and c(9-12). The alpha and beta chains form an alternating ring which encloses part of the gamma chain. CF(1) is attached to CF(0) by a central stalk formed by the gamma and epsilon chains, while a peripheral stalk is formed by the delta and b chains.

It localises to the cell inner membrane. The enzyme catalyses ATP + H2O + 4 H(+)(in) = ADP + phosphate + 5 H(+)(out). Functionally, produces ATP from ADP in the presence of a proton gradient across the membrane. The catalytic sites are hosted primarily by the beta subunits. This Hydrogenovibrio crunogenus (strain DSM 25203 / XCL-2) (Thiomicrospira crunogena) protein is ATP synthase subunit beta.